A 79-amino-acid chain; its full sequence is Putative membrane protein insertion efficiency factor (79 aa).

The protein belongs to the UPF0161 family.

The protein localises to the cell inner membrane. Could be involved in insertion of integral membrane proteins into the membrane. The polypeptide is Putative membrane protein insertion efficiency factor (Cytophaga hutchinsonii (strain ATCC 33406 / DSM 1761 / CIP 103989 / NBRC 15051 / NCIMB 9469 / D465)).